Here is a 368-residue protein sequence, read N- to C-terminus: D-Ala-D/L-Ala epimerase (368 aa).

Substrate contacts are provided by residues T135 and 160–162 (KVK). Mg(2+) contacts are provided by D190, E216, and D241. Substrate contacts are provided by residues K265 and 318–320 (DFD).

The protein belongs to the mandelate racemase/muconate lactonizing enzyme family. Mg(2+) is required as a cofactor.

Catalyzes the epimerization of D-Ala-D-Ala to D-Ala-L-Ala. Has broad substrate specificity and catalyzes the epimerization of a variety of dipeptides containing an N-terminal Ala followed by a hydrophobic or polar residue, such as Val, Ser and Met (in vitro). This chain is D-Ala-D/L-Ala epimerase (tfdD), found in Cytophaga hutchinsonii (strain ATCC 33406 / DSM 1761 / CIP 103989 / NBRC 15051 / NCIMB 9469 / D465).